Consider the following 357-residue polypeptide: Cytochrome c peroxidase, mitochondrial (357 aa).

The N-terminal 23 residues, 1–23 (MSATALRIAPIASRTFQRRLGYL), are a transit peptide targeting the mitochondrion. His116 (proton acceptor) is an active-site residue. Residues 189 to 212 (PWRSGRTDLPEDMTPDNGRLPDGD) form a disordered region. His239 is a heme b binding site. Residue Trp255 is the Tryptophan radical intermediate of the active site.

The protein belongs to the peroxidase family. Cytochrome c peroxidase subfamily. In terms of assembly, forms a one-to-one complex with cytochrome c. Requires heme b as cofactor.

The protein resides in the mitochondrion matrix. It localises to the mitochondrion intermembrane space. It catalyses the reaction 2 Fe(II)-[cytochrome c] + H2O2 + 2 H(+) = 2 Fe(III)-[cytochrome c] + 2 H2O. Its function is as follows. Destroys radicals which are normally produced within the cells and which are toxic to biological systems. This Candida glabrata (strain ATCC 2001 / BCRC 20586 / JCM 3761 / NBRC 0622 / NRRL Y-65 / CBS 138) (Yeast) protein is Cytochrome c peroxidase, mitochondrial.